Consider the following 341-residue polypeptide: Retinol dehydrogenase 10 (341 aa).

A helical; Signal-anchor membrane pass occupies residues 3-23 (IVVEFFLVTFKVLWAFVLAAA). 40 to 64 (LITGAGSGLGRLFALEFARRRALLV) is an NADP(+) binding site. Serine 197 provides a ligand contact to substrate. The active-site Proton acceptor is tyrosine 210.

This sequence belongs to the short-chain dehydrogenases/reductases (SDR) family. Detected in retina, entire eyecups and in liver (at protein level).

It localises to the microsome membrane. It is found in the endoplasmic reticulum membrane. The enzyme catalyses all-trans-retinol + NADP(+) = all-trans-retinal + NADPH + H(+). It functions in the pathway cofactor metabolism; retinol metabolism. Retinol dehydrogenase with a clear preference for NADP. Converts all-trans-retinol to all-trans-retinal. The chain is Retinol dehydrogenase 10 (Rdh10) from Rattus norvegicus (Rat).